Consider the following 401-residue polypeptide: Pectate lyase (401 aa).

An N-terminal signal peptide occupies residues 1-20 (MATTILPLILFISSLAIASS). N-linked (GlcNAc...) asparagine glycosylation occurs at Asn38. 3 residues coordinate Ca(2+): Asp199, Asp223, and Asp227. Residue Arg279 is part of the active site.

It belongs to the polysaccharide lyase 1 family. Ca(2+) is required as a cofactor. As to expression, expressed in sites of vascular differentiation and in new primordia on the flank of the shoot meristem.

The catalysed reaction is Eliminative cleavage of (1-&gt;4)-alpha-D-galacturonan to give oligosaccharides with 4-deoxy-alpha-D-galact-4-enuronosyl groups at their non-reducing ends.. The protein operates within glycan metabolism; pectin degradation; 2-dehydro-3-deoxy-D-gluconate from pectin: step 2/5. Involved in the degradation of pectin. May assist in the removal and modification of an existing pectin matrix in order to allow the deposition of newly synthesized walls polymers for a specialized function or to create an architecture that is extensible. In Zinnia elegans (Garden zinnia), this protein is Pectate lyase.